The chain runs to 124 residues: Protein BEX3 (124 aa).

Positions 1–56 (MANVHQENEEMEQPLQNGQEDRPVGGGEGHQPAANNNNNNHNHNHNHHRRGQARRL) are disordered. A compositionally biased stretch (basic residues) spans 42–53 (NHNHNHHRRGQA). Residues 81 to 106 (EMFMEEMREIRRKLRELQLRNCLRIL) are interaction with p75NTR/NGFR. Positions 81-124 (EMFMEEMREIRRKLRELQLRNCLRILMGELSNHHDHHDEFCLMP) are interaction with 14-3-3 epsilon. The Nuclear export signal motif lies at 90–100 (IRRKLRELQLR). A his cluster region spans residues 113–117 (HHDHH). Cysteine 121 is a Zn(2+) binding site.

The protein belongs to the BEX family. As to quaternary structure, self-associates. Binds to the DEATH domain of p75NTR/NGFR. Interacts with 14-3-3 epsilon (YWHAE). Interacts with DIABLO/SMAC. In terms of processing, ubiquitinated. Degraded by the proteasome. Widely expressed.

The protein localises to the nucleus. It is found in the cytoplasm. The protein resides in the cytosol. In terms of biological role, may be a signaling adapter molecule involved in NGFR/p75NTR-mediated apoptosis induced by NGF. Plays a role in zinc-triggered neuronal death. In absence of reductive stress, acts as a pseudosubstrate for the CRL2(FEM1B) complex: associates with FEM1B via zinc, thereby preventing association between FEM1B and its substrates. The polypeptide is Protein BEX3 (Mus musculus (Mouse)).